The primary structure comprises 234 residues: Thiamine import ATP-binding protein ThiQ (234 aa).

One can recognise an ABC transporter domain in the interval Leu-2–Val-230. ATP is bound at residue Gly-32–Ser-39.

The protein belongs to the ABC transporter superfamily. Thiamine importer (TC 3.A.1.19.1) family. As to quaternary structure, the complex is composed of two ATP-binding proteins (ThiQ), two transmembrane proteins (ThiP) and a solute-binding protein (ThiB).

The protein localises to the cell inner membrane. The enzyme catalyses thiamine(out) + ATP + H2O = thiamine(in) + ADP + phosphate + H(+). Part of the ABC transporter complex ThiBPQ involved in thiamine import. Responsible for energy coupling to the transport system. The protein is Thiamine import ATP-binding protein ThiQ of Vibrio parahaemolyticus serotype O3:K6 (strain RIMD 2210633).